Reading from the N-terminus, the 268-residue chain is Cyclohexadienyl dehydratase (268 aa).

Residues 1-25 form the signal peptide; that stretch reads MPKSFRHLVQALACLALLASASLQA.

It belongs to the bacterial solute-binding protein 3 family. As to quaternary structure, homodimer.

The protein resides in the periplasm. It catalyses the reaction prephenate + H(+) = 3-phenylpyruvate + CO2 + H2O. It carries out the reaction L-arogenate + H(+) = L-phenylalanine + CO2 + H2O. Its pathway is amino-acid biosynthesis; L-phenylalanine biosynthesis; L-phenylalanine from L-arogenate: step 1/1. It participates in amino-acid biosynthesis; L-phenylalanine biosynthesis; phenylpyruvate from prephenate: step 1/1. In terms of biological role, forms alternative pathway for phenylalanine biosynthesis. Can catalyze two reactions: prephenate dehydratase and arogenate dehydratase. May have a role in chemotaxis or transport. The sequence is that of Cyclohexadienyl dehydratase (pheC) from Pseudomonas aeruginosa (strain ATCC 15692 / DSM 22644 / CIP 104116 / JCM 14847 / LMG 12228 / 1C / PRS 101 / PAO1).